The sequence spans 374 residues: Ribosomal RNA large subunit methyltransferase G (374 aa).

The protein belongs to the methyltransferase superfamily. RlmG family.

It is found in the cytoplasm. The catalysed reaction is guanosine(1835) in 23S rRNA + S-adenosyl-L-methionine = N(2)-methylguanosine(1835) in 23S rRNA + S-adenosyl-L-homocysteine + H(+). Functionally, specifically methylates the guanine in position 1835 (m2G1835) of 23S rRNA. The polypeptide is Ribosomal RNA large subunit methyltransferase G (Pseudomonas fluorescens (strain ATCC BAA-477 / NRRL B-23932 / Pf-5)).